Consider the following 232-residue polypeptide: Somatolactin (232 aa).

The signal sequence occupies residues 1 to 16 (MHNWKGVWLCSLFLTF). Intrachain disulfides connect cysteine 31-cysteine 41, cysteine 91-cysteine 206, and cysteine 223-cysteine 231. Asparagine 147 is a glycosylation site (N-linked (GlcNAc...) asparagine).

Belongs to the somatotropin/prolactin family. Pituitary gland.

It localises to the secreted. In Protopterus annectens (African lungfish), this protein is Somatolactin.